A 352-amino-acid chain; its full sequence is SKP1-like protein 20 (352 aa).

An interaction with the F-box domain of F-box proteins region spans residues Thr108–Ile167. 2 disordered regions span residues Lys214–Gln251 and Leu267–Asp288. The segment covering Val216 to Asp230 has biased composition (basic residues). The segment covering Ile239 to Ser249 has biased composition (basic and acidic residues).

This sequence belongs to the SKP1 family. As to quaternary structure, part of a SCF (SKP1-cullin-F-box) protein ligase complex. As to expression, expressed in young seedlings, roots, leaves, floral stems, inflorescences, and siliques.

The protein localises to the nucleus. It functions in the pathway protein modification; protein ubiquitination. Functionally, involved in ubiquitination and subsequent proteasomal degradation of target proteins. Together with CUL1, RBX1 and a F-box protein, it forms a SCF E3 ubiquitin ligase complex. The functional specificity of this complex depends on the type of F-box protein. In the SCF complex, it serves as an adapter that links the F-box protein to CUL1. In Arabidopsis thaliana (Mouse-ear cress), this protein is SKP1-like protein 20 (ASK20).